A 286-amino-acid polypeptide reads, in one-letter code: Nucleoid occlusion protein (286 aa).

Residues 147-166 constitute a DNA-binding region (H-T-H motif); that stretch reads EALAQRLGKNQSTVANKLRL.

It belongs to the ParB family.

Its subcellular location is the cytoplasm. The protein resides in the nucleoid. In terms of biological role, effects nucleoid occlusion by binding relatively nonspecifically to DNA and preventing the assembly of the division machinery in the vicinity of the nucleoid, especially under conditions that disturb the cell cycle. It helps to coordinate cell division and chromosome segregation by preventing the formation of the Z ring through the nucleoid, which would cause chromosome breakage. This Oceanobacillus iheyensis (strain DSM 14371 / CIP 107618 / JCM 11309 / KCTC 3954 / HTE831) protein is Nucleoid occlusion protein.